Here is a 440-residue protein sequence, read N- to C-terminus: Chromosome partition protein MukF (440 aa).

Residues 208–236 (LSETSGTLRELQDTLEAAGDKLQANLLRI) are leucine-zipper.

This sequence belongs to the MukF family. In terms of assembly, interacts, and probably forms a ternary complex, with MukE and MukB via its C-terminal region. The complex formation is stimulated by calcium or magnesium. It is required for an interaction between MukE and MukB.

It localises to the cytoplasm. It is found in the nucleoid. Functionally, involved in chromosome condensation, segregation and cell cycle progression. May participate in facilitating chromosome segregation by condensation DNA from both sides of a centrally located replisome during cell division. Not required for mini-F plasmid partitioning. Probably acts via its interaction with MukB and MukE. Overexpression results in anucleate cells. It has a calcium binding activity. The chain is Chromosome partition protein MukF from Salmonella gallinarum (strain 287/91 / NCTC 13346).